We begin with the raw amino-acid sequence, 291 residues long: 4-diphosphocytidyl-2-C-methyl-D-erythritol kinase (291 aa).

Lysine 11 is a catalytic residue. 97 to 107 (PVAAGIGGGSS) lines the ATP pocket. The active site involves aspartate 139.

It belongs to the GHMP kinase family. IspE subfamily.

It catalyses the reaction 4-CDP-2-C-methyl-D-erythritol + ATP = 4-CDP-2-C-methyl-D-erythritol 2-phosphate + ADP + H(+). It functions in the pathway isoprenoid biosynthesis; isopentenyl diphosphate biosynthesis via DXP pathway; isopentenyl diphosphate from 1-deoxy-D-xylulose 5-phosphate: step 3/6. Its function is as follows. Catalyzes the phosphorylation of the position 2 hydroxy group of 4-diphosphocytidyl-2C-methyl-D-erythritol. This is 4-diphosphocytidyl-2-C-methyl-D-erythritol kinase from Methylorubrum extorquens (strain PA1) (Methylobacterium extorquens).